We begin with the raw amino-acid sequence, 324 residues long: CIMIP2 protein GA14893 (324 aa).

It belongs to the CIMIP2 family.

It localises to the cytoplasm. The protein localises to the cytoskeleton. The protein resides in the cilium axoneme. Its function is as follows. Probable microtubule inner protein (MIP) part of the dynein-decorated doublet microtubules (DMTs) in cilium axoneme. This chain is CIMIP2 protein GA14893, found in Drosophila pseudoobscura pseudoobscura (Fruit fly).